The sequence spans 277 residues: Cell division protein ZipA (277 aa).

At 1-5 (MQDLR) the chain is on the periplasmic side. Residues 6–26 (LMLLLFGVITIIVLFLHGVWA) form a helical membrane-spanning segment. Residues 27-277 (RRKERSALFY…NALIRSTPHL (251 aa)) lie on the Cytoplasmic side of the membrane. Residues 120 to 139 (QKKSDDLSHQSKETHHPSIQ) are disordered.

This sequence belongs to the ZipA family. In terms of assembly, interacts with FtsZ via their C-terminal domains.

Its subcellular location is the cell inner membrane. Its function is as follows. Essential cell division protein that stabilizes the FtsZ protofilaments by cross-linking them and that serves as a cytoplasmic membrane anchor for the Z ring. Also required for the recruitment to the septal ring of downstream cell division proteins. The chain is Cell division protein ZipA from Hamiltonella defensa subsp. Acyrthosiphon pisum (strain 5AT).